A 573-amino-acid polypeptide reads, in one-letter code: Sulfite oxidase, mitochondrial (573 aa).

The N-terminal 34 residues, 1–34 (MRLLRPSWAGLLRGRHHQHQRHHRRLLLTTSRGS), are a transit peptide targeting the mitochondrion. Positions 14–26 (GRHHQHQRHHRRL) are enriched in basic residues. The disordered stretch occupies residues 14-50 (GRHHQHQRHHRRLLLTTSRGSNGEREEQQHSQWSSPG). Residues 108 to 186 (LPTYRAEEVE…LEGFRIGNLE (79 aa)) enclose the Cytochrome b5 heme-binding domain. The heme b site is built by His-144 and His-168. Positions 190-199 (VTNVDDELGS) are hinge. The tract at residues 200 to 423 (PWSQEPQRHA…DSHWQQNDYK (224 aa)) is moco domain. Mo-molybdopterin-binding positions include 240–244 (YVRNH), Cys-287, Asp-344, His-383, Arg-388, and 399–401 (NVK). Positions 424–567 (GFSPSTDWDT…RGVLANAYHK (144 aa)) are homodimerization.

It depends on heme b as a cofactor. Requires Mo-molybdopterin as cofactor. Expressed in the ensheathing glia with relatively weak expression in the CNS cortex (at protein level).

It localises to the mitochondrion intermembrane space. It catalyses the reaction sulfite + O2 + H2O = sulfate + H2O2. It participates in energy metabolism; sulfur metabolism. In terms of biological role, required in ensheathing glial cells for normal larval locomotion. Oxidizes sulfite which is required to maintain glutamate homeostasis and as a consequence, neuronal network function. The polypeptide is Sulfite oxidase, mitochondrial (Drosophila melanogaster (Fruit fly)).